We begin with the raw amino-acid sequence, 344 residues long: Dihydroorotase (344 aa).

Residues H13 and H15 each coordinate Zn(2+). Residues 15–17 (HLR) and N41 contribute to the substrate site. Zn(2+) is bound by residues K98, H135, and H173. K98 carries the post-translational modification N6-carboxylysine. Position 135 (H135) interacts with substrate. L218 contacts substrate. D247 provides a ligand contact to Zn(2+). D247 is an active-site residue. Residues H251 and A263 each contribute to the substrate site.

Belongs to the metallo-dependent hydrolases superfamily. DHOase family. Class II DHOase subfamily. In terms of assembly, homodimer. Zn(2+) serves as cofactor.

The enzyme catalyses (S)-dihydroorotate + H2O = N-carbamoyl-L-aspartate + H(+). It functions in the pathway pyrimidine metabolism; UMP biosynthesis via de novo pathway; (S)-dihydroorotate from bicarbonate: step 3/3. Functionally, catalyzes the reversible cyclization of carbamoyl aspartate to dihydroorotate. The polypeptide is Dihydroorotase (Neisseria gonorrhoeae (strain NCCP11945)).